The sequence spans 120 residues: MFLLPKYDSFWLFLLIASLIPVSAFSISKILAPVSQGPEKLTSYESGIEPMGDAWIQFQIRYYMFALVFVIFDVETVFLYPWAMSFKELGISAFIEALIFVLILIIGLIYAWRKGALEWS.

Transmembrane regions (helical) follow at residues 10–30 (FWLF…ISKI), 64–84 (MFAL…PWAM), and 89–109 (LGIS…IGLI).

Belongs to the complex I subunit 3 family. NDH is composed of at least 16 different subunits, 5 of which are encoded in the nucleus.

The protein resides in the plastid. Its subcellular location is the chloroplast thylakoid membrane. The enzyme catalyses a plastoquinone + NADH + (n+1) H(+)(in) = a plastoquinol + NAD(+) + n H(+)(out). It carries out the reaction a plastoquinone + NADPH + (n+1) H(+)(in) = a plastoquinol + NADP(+) + n H(+)(out). NDH shuttles electrons from NAD(P)H:plastoquinone, via FMN and iron-sulfur (Fe-S) centers, to quinones in the photosynthetic chain and possibly in a chloroplast respiratory chain. The immediate electron acceptor for the enzyme in this species is believed to be plastoquinone. Couples the redox reaction to proton translocation, and thus conserves the redox energy in a proton gradient. This Angiopteris evecta (Mule's foot fern) protein is NAD(P)H-quinone oxidoreductase subunit 3, chloroplastic.